The following is a 516-amino-acid chain: mRNA export factor ICP27 homolog (516 aa).

Positions 231, 336, 338, and 343 each coordinate Zn(2+). Residues 231–343 form a CHC2-type zinc finger; sequence CVFNDNGHGD…SNHKCDDVSC (113 aa). The span at 399-409 shows a compositional bias: polar residues; that stretch reads YSTSRDLPQTS. The interval 399–423 is disordered; it reads YSTSRDLPQTSHRSHKNQGTPKVKS.

Belongs to the HHV-1 ICP27 protein family.

Its subcellular location is the virion tegument. The protein localises to the virion. The protein resides in the host nucleus. It localises to the host cytoplasm. Its function is as follows. Immediate early (EI) protein that plays many roles during productive infection including regulation of viral gene expression and nuclear export of intronless viral RNAs. The protein is mRNA export factor ICP27 homolog of Homo sapiens (Human).